The following is a 175-amino-acid chain: Inorganic pyrophosphatase (175 aa).

Substrate is bound by residues K30, R44, and Y56. D66, D71, and D103 together coordinate Mg(2+). Position 142 (Y142) interacts with substrate.

This sequence belongs to the PPase family. Homohexamer. Mg(2+) is required as a cofactor.

Its subcellular location is the cytoplasm. It carries out the reaction diphosphate + H2O = 2 phosphate + H(+). Its function is as follows. Catalyzes the hydrolysis of inorganic pyrophosphate (PPi) forming two phosphate ions. This is Inorganic pyrophosphatase from Haemophilus ducreyi (strain 35000HP / ATCC 700724).